The chain runs to 295 residues: MTNVTGTERVKRGMAEMQKGGVIMDVINAEQAKIAEEAGAVAVMALERVPADIRAAGGVSRMADPTIVEEVMGAVSIPVMAKCRIGHLVEARVLESLGVDYIDESEVLTPADEVYHLNKRDYTVPFVCGCRDIGEAARRIAEGASMLRTKGEPGTGNIVEAVRHMRQVNAEIRQVASLREDELMTYAKNTGAPYEVLLEIKRLGRLPVVNFAAGGVATPADAALMMQLGADGVFVGSGIFKSENPERFARAIVEATTHYEDYELIASLSKGLGNAMKGIEISTLLPEQRMQERGW.

Asp25 serves as a coordination point for D-ribose 5-phosphate. Catalysis depends on Lys82, which acts as the Schiff-base intermediate with D-ribose 5-phosphate. A D-ribose 5-phosphate-binding site is contributed by Gly154. Arg166 lines the D-glyceraldehyde 3-phosphate pocket. D-ribose 5-phosphate-binding positions include Gly215 and 236–237 (GS).

Belongs to the PdxS/SNZ family. In the presence of PdxT, forms a dodecamer of heterodimers.

The enzyme catalyses aldehydo-D-ribose 5-phosphate + D-glyceraldehyde 3-phosphate + L-glutamine = pyridoxal 5'-phosphate + L-glutamate + phosphate + 3 H2O + H(+). Its pathway is cofactor biosynthesis; pyridoxal 5'-phosphate biosynthesis. Functionally, catalyzes the formation of pyridoxal 5'-phosphate from ribose 5-phosphate (RBP), glyceraldehyde 3-phosphate (G3P) and ammonia. The ammonia is provided by the PdxT subunit. Can also use ribulose 5-phosphate and dihydroxyacetone phosphate as substrates, resulting from enzyme-catalyzed isomerization of RBP and G3P, respectively. The protein is Pyridoxal 5'-phosphate synthase subunit PdxS of Bacillus cereus (strain G9842).